We begin with the raw amino-acid sequence, 101 residues long: NAD(P)H-quinone oxidoreductase subunit 4L, chloroplastic (101 aa).

A run of 3 helical transmembrane segments spans residues 2-22 (MLEH…YGLI), 32-52 (MCLE…SDLF), and 61-81 (IFSI…PAIV).

It belongs to the complex I subunit 4L family. In terms of assembly, NDH is composed of at least 16 different subunits, 5 of which are encoded in the nucleus.

The protein localises to the plastid. It is found in the chloroplast thylakoid membrane. The enzyme catalyses a plastoquinone + NADH + (n+1) H(+)(in) = a plastoquinol + NAD(+) + n H(+)(out). It catalyses the reaction a plastoquinone + NADPH + (n+1) H(+)(in) = a plastoquinol + NADP(+) + n H(+)(out). In terms of biological role, NDH shuttles electrons from NAD(P)H:plastoquinone, via FMN and iron-sulfur (Fe-S) centers, to quinones in the photosynthetic chain and possibly in a chloroplast respiratory chain. The immediate electron acceptor for the enzyme in this species is believed to be plastoquinone. Couples the redox reaction to proton translocation, and thus conserves the redox energy in a proton gradient. This chain is NAD(P)H-quinone oxidoreductase subunit 4L, chloroplastic, found in Chloranthus spicatus (Chulantree).